We begin with the raw amino-acid sequence, 829 residues long: MTERIRARGPRSSSVNSVPLILDIEDFKGDFSFDALFGNLVNDLLPSFLDEEADSGDGHGNIAGVDGLTNGHLRGQSAPLSSAPFFPEVDGLLSLFKDACKELVDLRKQVDGRLNTLKKEVSTQDSKHRKTLTEIEKGVDGLFESFARLDGRISSVGQTAAKIGDHLQSADAQRETASQTIDLIKYLMEFNGSPGDLMELSALFSDDSRVAEAASIAQKLRSFAEEDIGRQGASTAAGNATPGRGLEVAVANLQDYCNELENRLLSRFDAASQRRDLSTMSECAKILSQFNRGTSAMQHYVATRPMFIDVEVMNSDIRLVLGDHGSQPSPSNVARGLSALFKEITDTVRKEAATITAVFPTPNEVMAILVQRVLEQRVTGILDKILAKPSLMSPPPVQEGGLLLYLRMLAVAYERTQELAKDLRAVGCGDLDVEDLTESLFSSHKDEYPEHERASLKQLYQAKMEELRAESQQVSESSGTIGRSKGASISSSLQQISVTFVTEFVRWNEEAITRCTLFSSQPATLAANVKAIFTCLLDQVSVYITEGLERARDSLSEAAALRERFVLGTSVSRRVAAAAASAAEAAAAAGESSFKSFMVAVQRCGSSVAIVQQYFANSISRLLLPVDGAHAASCEEMSTALSKAEAAAYKGLQQCIETVMAEVDRLLSSEQKSTDYRSPDDGIASDHRPTNACIRVVAYLSRVLESAFTALEGLNKQAFLTELGNRLEKLLLTHWQKFTFNPSGGLRLKRDLNEYVGFVKSFGAPSVDEKFELLGIIANVFIVAPDSLPTLFEGSPSIRKDAQRFIQLREDYKSAKLATKLSSLWPSLS.

Residues 244 to 266 (RGLEVAVANLQDYCNELENRLLS) adopt a coiled-coil conformation.

Belongs to the SEC10 family. The exocyst complex is composed of SEC3, SEC5, SEC6, SEC8, SEC10, EXO70A1 and EXO84B. Interacts with EXO84B. Binds to EXO70E2. As to expression, expressed in seedlings, roots, leaves and flowers.

Its subcellular location is the cytoplasm. The protein resides in the cytosol. The protein localises to the secreted. It localises to the extracellular exosome. In terms of biological role, component of the exocyst complex involved in the docking of exocytic vesicles with fusion sites on the plasma membrane during regulated or polarized secretion. Involved in polarized cell growth and organ morphogenesis. During cytokinesis, involved in cell plate initiation, cell plate maturation and formation of new primary cell wall. The chain is Exocyst complex component SEC10b from Arabidopsis thaliana (Mouse-ear cress).